We begin with the raw amino-acid sequence, 250 residues long: Proteasome subunit alpha type-7-B (250 aa).

A Glycyl lysine isopeptide (Lys-Gly) (interchain with G-Cter in ubiquitin) cross-link involves residue lysine 62.

It belongs to the peptidase T1A family. As to quaternary structure, component of the 20S core complex of the 26S proteasome. The 26S proteasome is composed of a core protease (CP), known as the 20S proteasome, capped at one or both ends by the 19S regulatory particle (RP/PA700). The 20S proteasome core is composed of 28 subunits that are arranged in four stacked rings, resulting in a barrel-shaped structure. The two end rings are each formed by seven alpha subunits, and the two central rings are each formed by seven beta subunits. The catalytic chamber with the active sites is on the inside of the barrel.

The protein localises to the cytoplasm. It is found in the nucleus. Functionally, the proteasome is a multicatalytic proteinase complex which is characterized by its ability to cleave peptides with Arg, Phe, Tyr, Leu, and Glu adjacent to the leaving group at neutral or slightly basic pH. The proteasome has an ATP-dependent proteolytic activity. The sequence is that of Proteasome subunit alpha type-7-B (PAD2) from Arabidopsis thaliana (Mouse-ear cress).